Here is a 125-residue protein sequence, read N- to C-terminus: Photoactive yellow protein (125 aa).

The 64-residue stretch at 23 to 86 (LDGLAFGAIQ…GKFKEGVASG (64 aa)) folds into the PAS domain. Position 69 is an S-(4-hydroxycinnamyl)cysteine (C69).

The protein belongs to the photoactive yellow protein family. In terms of assembly, monomer. Post-translationally, the 4-hydroxycinnamic acid (p-coumaric acid) chromophore is covalently bound via a thioester linkage.

In terms of biological role, photoactive blue light protein. Probably functions as a photoreceptor for a negative phototaxis response. The polypeptide is Photoactive yellow protein (pyp) (Halorhodospira halophila (Ectothiorhodospira halophila)).